Reading from the N-terminus, the 180-residue chain is Acireductone dioxygenase (180 aa).

Positions 96, 98, 102, and 140 each coordinate Fe(2+). 4 residues coordinate Ni(2+): H96, H98, E102, and H140.

It belongs to the acireductone dioxygenase (ARD) family. As to quaternary structure, monomer. Fe(2+) serves as cofactor. Requires Ni(2+) as cofactor.

It catalyses the reaction 1,2-dihydroxy-5-(methylsulfanyl)pent-1-en-3-one + O2 = 3-(methylsulfanyl)propanoate + CO + formate + 2 H(+). It carries out the reaction 1,2-dihydroxy-5-(methylsulfanyl)pent-1-en-3-one + O2 = 4-methylsulfanyl-2-oxobutanoate + formate + 2 H(+). Its pathway is amino-acid biosynthesis; L-methionine biosynthesis via salvage pathway; L-methionine from S-methyl-5-thio-alpha-D-ribose 1-phosphate: step 5/6. Functionally, catalyzes 2 different reactions between oxygen and the acireductone 1,2-dihydroxy-3-keto-5-methylthiopentene (DHK-MTPene) depending upon the metal bound in the active site. Fe-containing acireductone dioxygenase (Fe-ARD) produces formate and 2-keto-4-methylthiobutyrate (KMTB), the alpha-ketoacid precursor of methionine in the methionine recycle pathway. Ni-containing acireductone dioxygenase (Ni-ARD) produces methylthiopropionate, carbon monoxide and formate, and does not lie on the methionine recycle pathway. This chain is Acireductone dioxygenase, found in Synechococcus sp. (strain WH7803).